The chain runs to 1534 residues: Ribosome-binding protein 1 (1534 aa).

Residues 1–7 are Lumenal-facing; that stretch reads MDIYDTQ. The chain crosses the membrane as a helical span at residues 8–28; sequence TLGVMVFGGFMVVSAIGIFLV. Topologically, residues 29-1534 are cytoplasmic; the sequence is STFSMKETSY…DSSSKEGTSV (1506 aa). 2 disordered regions span residues 45 to 91 and 125 to 152; these read QRKE…PAPN and PAMP…VEPA. Over residues 52–63 the composition is skewed to basic residues; the sequence is THHQKVEKKKKE. Positions 64-88 are enriched in basic and acidic residues; sequence KTVEKKGKTKKKEEKPNGKIPDHEP. The span at 125–135 shows a compositional bias: low complexity; the sequence is PAMPQEKLAPS. A Glycyl lysine isopeptide (Lys-Gly) (interchain with G-Cter in SUMO2) cross-link involves residue Lys-148. A phosphoserine mark is found at Ser-159 and Ser-165. 3 disordered regions span residues 173 to 780, 968 to 987, and 1021 to 1082; these read APKE…PLYL, KELV…RKAL, and RELC…RAEN. Over residues 175–194 the composition is skewed to low complexity; sequence KEVPMVVVPPVGAKAGTPAT. 54 tandem repeats follow at residues 197-206, 207-216, 217-226, 227-236, 237-246, 247-256, 257-266, 267-276, 277-286, 287-296, 297-306, 307-316, 317-326, 327-336, 337-346, 347-356, 357-366, 367-376, 377-386, 387-396, 397-406, 407-416, 417-426, 427-436, 437-446, 447-456, 457-466, 467-476, 477-486, 487-496, 497-506, 507-516, 517-526, 527-536, 537-546, 547-556, 557-566, 567-576, 577-586, 587-596, 597-606, 607-616, 617-626, 627-636, 637-646, 647-656, 657-666, 667-676, 677-686, 687-696, 697-706, 707-716, 717-726, and 727-736. A 54 X 10 AA tandem repeats of [NASG]-[QL]-[GS]-[KRT]-[KR]-[AVTSEG]-[ED]-[AGVLS]-[ATGSV]-[PQLSA] region spans residues 197 to 736; it reads AQGKKAEGAQ…NQSKRAESAP (540 aa). The residue at position 275 (Thr-275) is a Phosphothreonine. Residues 395-428 are compositionally biased toward polar residues; sequence AQNQGKKVEGVQNQGKKAEGAQNQGKKAEGTSSQ. Over residues 474–499 the composition is skewed to polar residues; that stretch reads GSQNQGKKTEGASNQGKKVDGAQNQG. A compositionally biased stretch (polar residues) spans 705–718; sequence TPNQGKKSEGSPNQ. Ser-715 bears the Phosphoserine mark. A Phosphoserine modification is found at Ser-747. Residue Lys-752 forms a Glycyl lysine isopeptide (Lys-Gly) (interchain with G-Cter in SUMO1) linkage. Ser-1032 carries the phosphoserine modification. Positions 1059-1080 are enriched in basic and acidic residues; the sequence is AEVKSKSEELSGLHGQLKEARA. Position 1064 is an N6-acetyllysine (Lys-1064). Phosphoserine is present on residues Ser-1091 and Ser-1110. 3 disordered regions span residues 1224–1251, 1391–1416, and 1509–1534; these read ELLK…ETQN, KSHV…VELK, and ERDT…GTSV. Residues 1509–1528 show a composition bias toward basic and acidic residues; that stretch reads ERDTVKKLQEQLDKTDDSSS.

The protein localises to the endoplasmic reticulum membrane. In terms of biological role, acts as a ribosome receptor and mediates interaction between the ribosome and the endoplasmic reticulum membrane. The chain is Ribosome-binding protein 1 (RRBP1) from Canis lupus familiaris (Dog).